The chain runs to 312 residues: Olfactory receptor 2C1 (312 aa).

The Extracellular segment spans residues Met1 to Glu24. An N-linked (GlcNAc...) asparagine glycan is attached at Asn6. The helical transmembrane segment at Ile25–Leu48 threads the bilayer. Topologically, residues Ser49–Thr57 are cytoplasmic. A helical membrane pass occupies residues Pro58 to Pro79. Residues Gln80–Gln100 are Extracellular-facing. Cys97 and Cys189 are joined by a disulfide. A helical membrane pass occupies residues Leu101 to Phe120. The Cytoplasmic portion of the chain corresponds to Asp121–Arg139. A helical membrane pass occupies residues Leu140 to Ser160. At Thr161–Asn200 the chain is on the extracellular side. The helical transmembrane segment at Gly201–Ala222 threads the bilayer. At Gln223–Lys236 the chain is on the cytoplasmic side. Residues Ala237 to Leu261 traverse the membrane as a helical segment. Topologically, residues Pro262 to Lys272 are extracellular. Residues Phe273 to Leu292 traverse the membrane as a helical segment. The Cytoplasmic portion of the chain corresponds to Arg293–Ser312.

This sequence belongs to the G-protein coupled receptor 1 family. In terms of tissue distribution, olfactory epithelium. Present in various subcellular compartments of the olfactory sensory neurons, particularly in the axonal processes and neve terminals.

It localises to the cell membrane. Olfactory receptor that is activated by the binding of organosulfur odorants with thioether groups such as (methylthio)methanetiol (MTMT). Also binds odorants acetophenone and benzaldehyde. The activity of this receptor is mediated by G proteins which activate adenylyl cyclase. May be involved in the molecular processes underlying fasciculation and targeting of olfactory axons. This Mus musculus (Mouse) protein is Olfactory receptor 2C1.